The primary structure comprises 1226 residues: Probable DNA-binding protein SNT1 (1226 aa).

2 disordered regions span residues 1–219 (MGYP…YSRS) and 264–331 (LKST…PDNI). Over residues 11–27 (GDKKRYHYSNNPNRRHP) the composition is skewed to basic residues. Over residues 31 to 64 (YSKNSFPKSSNNGFVSSPTADNSTNPSVTPSTAS) the composition is skewed to polar residues. Low complexity-rich tracts occupy residues 81-103 (PRPS…SSTR) and 116-131 (SSST…NTST). Composition is skewed to polar residues over residues 132-143 (ITHTNTDIGNSR) and 150-170 (SRYN…SALS). Ser187 carries the phosphoserine modification. Positions 202 to 211 (NNVSSVNNNS) are enriched in low complexity. A compositionally biased stretch (polar residues) spans 264–275 (LKSTHSQSSPSL). Basic and acidic residues predominate over residues 280–304 (FHDANKLDKPEASVKVETPSKDETK). The residue at position 395 (Ser395) is a Phosphoserine. Residues 539-591 (DLQKKYEKECEILTKLSENLRKEEIENKRKEHELMEQKRREEGIETEKEKSLR) adopt a coiled-coil conformation. Positions 569 to 590 (EHELMEQKRREEGIETEKEKSL) are enriched in basic and acidic residues. The disordered stretch occupies residues 569 to 605 (EHELMEQKRREEGIETEKEKSLRHPSSSSSSRRRNRA). The region spanning 668–720 (DASDNFTDHEHSLFLEGYLIHPKKFGKISHYMGGLRSPEECVLHYYRTKKTVN) is the SANT domain. Residues 732–745 (RKMSAAAKRRKRKE) are compositionally biased toward basic residues. The interval 732–796 (RKMSAAAKRR…SEVKGDPLGT (65 aa)) is disordered. The segment covering 748–758 (NDEEVEVDESK) has biased composition (acidic residues). Basic and acidic residues predominate over residues 759–773 (EESTNTIEKEEKSEN). At Thr796 the chain carries Phosphothreonine. In terms of domain architecture, HTH myb-type spans 884–938 (APEHKTSYWSVRESQLFPELLKEFGSQWSLISEKLGTKSTTMVRNYYQRNAARNG). Positions 911–934 (WSLISEKLGTKSTTMVRNYYQRNA) form a DNA-binding region, H-T-H motif. Ser1037 is subject to Phosphoserine. Positions 1172-1194 (SQGTPTFPLPAPRTSPISRAPPK) are disordered.

Identified in a Set3C complex with SET3, HST1, HOS2, SIF2, CPR1 and HOS4.

It is found in the nucleus. Functionally, part of the Set3C complex, which is required to repress early/middle sporulation genes during meiosis. This is Probable DNA-binding protein SNT1 (SNT1) from Saccharomyces cerevisiae (strain ATCC 204508 / S288c) (Baker's yeast).